We begin with the raw amino-acid sequence, 446 residues long: tRNA-2-methylthio-N(6)-dimethylallyladenosine synthase (446 aa).

Residues 3 to 124 (KKLYIKTYGC…LPELISKVVR (122 aa)) enclose the MTTase N-terminal domain. Positions 12, 48, 87, 162, 166, and 169 each coordinate [4Fe-4S] cluster. The Radical SAM core domain maps to 148-380 (YPQGASSFIS…QKELAAQQLA (233 aa)). Residues 383–446 (ESCIGSTMKV…LNSLSGEIYR (64 aa)) enclose the TRAM domain.

It belongs to the methylthiotransferase family. MiaB subfamily. In terms of assembly, monomer. It depends on [4Fe-4S] cluster as a cofactor.

It is found in the cytoplasm. It carries out the reaction N(6)-dimethylallyladenosine(37) in tRNA + (sulfur carrier)-SH + AH2 + 2 S-adenosyl-L-methionine = 2-methylsulfanyl-N(6)-dimethylallyladenosine(37) in tRNA + (sulfur carrier)-H + 5'-deoxyadenosine + L-methionine + A + S-adenosyl-L-homocysteine + 2 H(+). Its function is as follows. Catalyzes the methylthiolation of N6-(dimethylallyl)adenosine (i(6)A), leading to the formation of 2-methylthio-N6-(dimethylallyl)adenosine (ms(2)i(6)A) at position 37 in tRNAs that read codons beginning with uridine. In Rickettsia bellii (strain OSU 85-389), this protein is tRNA-2-methylthio-N(6)-dimethylallyladenosine synthase.